The sequence spans 129 residues: Small ribosomal subunit protein bS16m (129 aa).

It belongs to the bacterial ribosomal protein bS16 family. As to quaternary structure, component of the mitochondrial ribosome small subunit (28S) which comprises a 12S rRNA and about 30 distinct proteins.

The protein resides in the mitochondrion. The polypeptide is Small ribosomal subunit protein bS16m (mRpS16) (Drosophila melanogaster (Fruit fly)).